The following is a 1755-amino-acid chain: Transposon Ty1-OL Gag-Pol polyprotein (1755 aa).

Composition is skewed to polar residues over residues 1–23, 48–60, and 127–152; these read MESQ…SVTS, TKAN…TPAS, and QSQF…GNTF. Disordered regions lie at residues 1–93, 126–173, and 352–421; these read MESQ…MMTQ, PQSQ…RPPP, and GSRN…SKST. Over residues 153-165 the composition is skewed to low complexity; that stretch reads TDSSSADSDMTST. The interval 299-401 is RNA-binding; it reads NNGIHINNKV…NSKSKTARAH (103 aa). Positions 402-418 are enriched in low complexity; the sequence is NVSTSNNSPSTDNDSIS. The residue at position 416 (Ser-416) is a Phosphoserine. Catalysis depends on Asp-461, which acts as the For protease activity; shared with dimeric partner. The interval 583-640 is integrase-type zinc finger-like; the sequence is NVHTSESTRKYPYPFIHRMLAHANAQTIRYSLKNNTITYFNESDVDWSSAIDYQCPDC. The 176-residue stretch at 660 to 835 folds into the Integrase catalytic domain; that stretch reads NSYEPFQYLH…AGLDISTLLP (176 aa). Residues Asp-671 and Asp-736 each contribute to the Mg(2+) site. 3 disordered regions span residues 956–1087, 1092–1111, and 1130–1171; these read SKAV…ETEK, RSPS…NIVP, and DLPL…DSNA. Low complexity predominate over residues 960–969; sequence SPTDSTPPST. Polar residues predominate over residues 1005 to 1015; that stretch reads STPQISNIEST. The span at 1038–1053 shows a compositional bias: basic and acidic residues; sequence ESSHASKSKDFRHSDS. 2 stretches are compositionally biased toward polar residues: residues 1054–1082 and 1101–1111; these read YSEN…QISD and PENNSSHNIVP. The Bipartite nuclear localization signal signature appears at 1178 to 1212; that stretch reads KKRSLEDNETEIKVSRDTWNTKNMRSLEPPRSKKR. Residues 1338–1476 enclose the Reverse transcriptase Ty1/copia-type domain; that stretch reads NNYYITQLDI…DILGLEIKYQ (139 aa). 6 residues coordinate Mg(2+): Asp-1346, Asp-1427, Asp-1428, Asp-1610, Glu-1652, and Asp-1685. The RNase H Ty1/copia-type domain occupies 1610–1752; sequence DASYGNQPYY…IKTFKLLTNK (143 aa).

The capsid protein forms a homotrimer, from which the VLPs are assembled. The protease is a homodimer, whose active site consists of two apposed aspartic acid residues. Post-translationally, initially, virus-like particles (VLPs) are composed of the structural unprocessed proteins Gag and Gag-Pol, and also contain the host initiator methionine tRNA (tRNA(i)-Met) which serves as a primer for minus-strand DNA synthesis, and a dimer of genomic Ty RNA. Processing of the polyproteins occurs within the particle and proceeds by an ordered pathway, called maturation. First, the protease (PR) is released by autocatalytic cleavage of the Gag-Pol polyprotein yielding capsid protein p45 and a Pol-p154 precursor protein. This cleavage is a prerequisite for subsequent processing of Pol-p154 at the remaining sites to release the mature structural and catalytic proteins. Maturation takes place prior to the RT reaction and is required to produce transposition-competent VLPs.

It is found in the cytoplasm. Its subcellular location is the nucleus. It catalyses the reaction DNA(n) + a 2'-deoxyribonucleoside 5'-triphosphate = DNA(n+1) + diphosphate. It carries out the reaction Endonucleolytic cleavage to 5'-phosphomonoester.. In terms of biological role, capsid protein (CA) is the structural component of the virus-like particle (VLP), forming the shell that encapsulates the retrotransposons dimeric RNA genome. The particles are assembled from trimer-clustered units and there are holes in the capsid shells that allow for the diffusion of macromolecules. CA also has nucleocapsid-like chaperone activity, promoting primer tRNA(i)-Met annealing to the multipartite primer-binding site (PBS), dimerization of Ty1 RNA and initiation of reverse transcription. Its function is as follows. The aspartyl protease (PR) mediates the proteolytic cleavages of the Gag and Gag-Pol polyproteins after assembly of the VLP. Reverse transcriptase/ribonuclease H (RT) is a multifunctional enzyme that catalyzes the conversion of the retro-elements RNA genome into dsDNA within the VLP. The enzyme displays a DNA polymerase activity that can copy either DNA or RNA templates, and a ribonuclease H (RNase H) activity that cleaves the RNA strand of RNA-DNA heteroduplexes during plus-strand synthesis and hydrolyzes RNA primers. The conversion leads to a linear dsDNA copy of the retrotransposon that includes long terminal repeats (LTRs) at both ends. Functionally, integrase (IN) targets the VLP to the nucleus, where a subparticle preintegration complex (PIC) containing at least integrase and the newly synthesized dsDNA copy of the retrotransposon must transit the nuclear membrane. Once in the nucleus, integrase performs the integration of the dsDNA into the host genome. The polypeptide is Transposon Ty1-OL Gag-Pol polyprotein (TY1B-OL) (Saccharomyces cerevisiae (strain ATCC 204508 / S288c) (Baker's yeast)).